The chain runs to 232 residues: Thiamine import ATP-binding protein ThiQ (232 aa).

One can recognise an ABC transporter domain in the interval 2-230 (LKLTDITWLY…KASASALLGI (229 aa)). An ATP-binding site is contributed by 32 to 39 (GPSGAGKS).

It belongs to the ABC transporter superfamily. Thiamine importer (TC 3.A.1.19.1) family. The complex is composed of two ATP-binding proteins (ThiQ), two transmembrane proteins (ThiP) and a solute-binding protein (ThiB).

The protein resides in the cell inner membrane. The catalysed reaction is thiamine(out) + ATP + H2O = thiamine(in) + ADP + phosphate + H(+). Its function is as follows. Part of the ABC transporter complex ThiBPQ involved in thiamine import. Responsible for energy coupling to the transport system. The sequence is that of Thiamine import ATP-binding protein ThiQ from Shigella sonnei (strain Ss046).